Here is a 701-residue protein sequence, read N- to C-terminus: MARKTPINRYRNIGIVAHVDAGKTTTTERVLFYTGLSHKIGEVHDGAATMDWMEQEQERGITITSAATTCFWAGMDKQYDQHRINIIDTPGHVDFTIEVERSLRVLDGAVVVFCGSSGVEPQSETVWRQADKYHVPRVVFVNKMDRAGADFERVVGQIRKRLGATCVPIHLNIGSEENFRGVIDLIKMKAINWNESDQGMTFTYEGIPAELQDRAEALRTELVEAAAEASDELMDKYLEGEELTEEEIKLALRQRTINNEIVLATCGSAFKNKGVQAVLDAVIEFLPAPADVPAITGVLDDKDETEATRPADDEAPFAALAFKIATDPFVGTLTFFRCYSGVVNTGDSVYNPVKAKRERFGRIVQMHAKDREELKEVRAGDIAAAIGLKDVTTGDTLCDPNHIITLERMDFPEPVISIAVEPRSQADQEKMALALGKLAAEDPSFKVNTDEESGQTIISGMGELHLDIIVDRMRREFSVECNVGKPQVAYRETIRGKVDVEGKFVRQSGGRGQFGHVWLTIEPNEEGAGYEFINNIVGGAIPKEFIPSVDKGIHEQMQNGVLAGYPVLDVKVTLFDGSYHDVDSSEMAFKIAGSMGFRKGAAEAKPVLLEPTMKVEVTTPEDWMGDVVGDLNRRRGVIEGMEDGVAGIKIVLAKVPLSEMFGYSTDLRSATQGRASYSMEFFNYSEAPNNVAKAIIDARQS.

In terms of domain architecture, tr-type G spans 8–290 (NRYRNIGIVA…AVIEFLPAPA (283 aa)). Residues 17 to 24 (AHVDAGKT), 88 to 92 (DTPGH), and 142 to 145 (NKMD) contribute to the GTP site.

Belongs to the TRAFAC class translation factor GTPase superfamily. Classic translation factor GTPase family. EF-G/EF-2 subfamily.

It localises to the cytoplasm. Catalyzes the GTP-dependent ribosomal translocation step during translation elongation. During this step, the ribosome changes from the pre-translocational (PRE) to the post-translocational (POST) state as the newly formed A-site-bound peptidyl-tRNA and P-site-bound deacylated tRNA move to the P and E sites, respectively. Catalyzes the coordinated movement of the two tRNA molecules, the mRNA and conformational changes in the ribosome. In Pseudoalteromonas atlantica (strain T6c / ATCC BAA-1087), this protein is Elongation factor G 2.